A 425-amino-acid chain; its full sequence is Riboflavin biosynthesis protein RibBA (425 aa).

Residues 1-204 form a DHBP synthase region; sequence MTRLDSVERA…IADLIEWRRK (204 aa). Residues 28–29, D33, 141–145, and E165 each bind D-ribulose 5-phosphate; these read RE and RPGHT. E29 is a binding site for Mg(2+). H144 is a binding site for Mg(2+). The interval 205–425 is GTP cyclohydrolase II; sequence HEKHIERIAE…HLPGEFGGAL (221 aa). 259–263 contacts GTP; sequence RVHSE. 3 residues coordinate Zn(2+): C264, C275, and C277. GTP contacts are provided by residues Q280, 303-305, and T325; that span reads EGR. D337 (proton acceptor; for GTP cyclohydrolase activity) is an active-site residue. The active-site Nucleophile; for GTP cyclohydrolase activity is the R339. GTP is bound by residues T360 and K365.

This sequence in the N-terminal section; belongs to the DHBP synthase family. In the C-terminal section; belongs to the GTP cyclohydrolase II family. The cofactor is Mg(2+). Requires Mn(2+) as cofactor. Zn(2+) serves as cofactor.

The enzyme catalyses D-ribulose 5-phosphate = (2S)-2-hydroxy-3-oxobutyl phosphate + formate + H(+). It catalyses the reaction GTP + 4 H2O = 2,5-diamino-6-hydroxy-4-(5-phosphoribosylamino)-pyrimidine + formate + 2 phosphate + 3 H(+). It participates in cofactor biosynthesis; riboflavin biosynthesis; 2-hydroxy-3-oxobutyl phosphate from D-ribulose 5-phosphate: step 1/1. It functions in the pathway cofactor biosynthesis; riboflavin biosynthesis; 5-amino-6-(D-ribitylamino)uracil from GTP: step 1/4. Its function is as follows. Catalyzes the conversion of D-ribulose 5-phosphate to formate and 3,4-dihydroxy-2-butanone 4-phosphate. In terms of biological role, catalyzes the conversion of GTP to 2,5-diamino-6-ribosylamino-4(3H)-pyrimidinone 5'-phosphate (DARP), formate and pyrophosphate. The polypeptide is Riboflavin biosynthesis protein RibBA (Mycobacterium avium (strain 104)).